The sequence spans 704 residues: ATP-dependent DNA helicase Hel308 (704 aa).

ATP is bound by residues glutamine 31 and 49–56 (SPTASGKT). A Helicase ATP-binding domain is found at 36 to 200 (RKGLLDGKRL…WLNAELVATN (165 aa)). Positions 148-151 (DEFH) match the DEAH box motif. Positions 235–439 (AIIAYTLDIV…AFYSFLISII (205 aa)) constitute a Helicase C-terminal domain. Residues 366–645 (VVGYMDLIPV…LHARVKDGVK (280 aa)) are binds Hjc. Residues 432 to 644 (YSFLISIIAS…ELHARVKDGV (213 aa)) form a required for helicase activity region. Positions 646–704 (PELIELVKIPGIGRVRARLLYQHDIKKPEDIVLNPEKVKQLLGPNLGEKIVREAARTIA) are inhibits intrinsic ATPase, and helicase.

This sequence belongs to the helicase family. Hel308 subfamily. Monomer; forms a 1:2 complex with Hjc, which may form a complex with Holliday junction DNA. Mg(2+) is required as a cofactor.

It catalyses the reaction Couples ATP hydrolysis with the unwinding of duplex DNA by translocating in the 3'-5' direction.. It carries out the reaction ATP + H2O = ADP + phosphate + H(+). The enzyme catalyses Couples ATP hydrolysis with the unwinding of duplex DNA at the replication fork by translocating in the 5'-3' direction. This creates two antiparallel DNA single strands (ssDNA). The leading ssDNA polymer is the template for DNA polymerase III holoenzyme which synthesizes a continuous strand.. With respect to regulation, helicase activity is inhibited by Hjc and by PCNA123 and PCNA323. Functionally, an ATP, Mg(2+)-dependent DNA 3'-5' and 5'-3' helicase that may be involved in repair of stalled replication forks. Stimulated by both ss and dsDNA. Unwinds both leading and lagging strands in replication fork structures, unlike orthologs in P.furiosus and M.thermautotrophicus which only unwind the lagging strand and only have 3'-5' helicase activity. Preferentially binds dsDNA with overhangs or branched DNA. Able to anneal DNA substrates that could form a replication fork-like structure, has replication fork reversal activity (at least in vitro). This is ATP-dependent DNA helicase Hel308 from Sulfurisphaera tokodaii (strain DSM 16993 / JCM 10545 / NBRC 100140 / 7) (Sulfolobus tokodaii).